The sequence spans 472 residues: MSLTQSAKLHIIHQSIGKITTRLYDTSPFHGDSHCKQRRVKDNCIQFNMNISNVLKCYSEIESFSINQRIRRSISLFLSILRSFYSMRMRLLDLFITSSIPVAKILLITGIGFYLALDQVNILNHDARKQLNNIVFYVFSPSLVASSLSETITYESMVKMWFMPLNVLLTFIIGSFLGWIVIKITKPPSHLRGIIVGCCAAGNLGNMPLIIIPAICNEKGSPFGDPESCEKFGLGYIALSMAIGAIYIWTYVYNLMRMLANPAGETAINSTSSTMPLISPKVEVAEQVGTWGKVKQRVCSVAEKINLRTIFAPSTIAALIALAVGLNPLLRKLLVGNTAPLRVIEDSVSLLGDGAIPVLTLIVGGNLLNGLRGSGINKSVIMGVVVVRYLLLPILGVFIVRGAHYLGLVTSEPLYQFVLLLQYVVPPAMNLGTITQLFGSGESECSVILFWSYALASVSLTVWPTFFMWLVA.

Topologically, residues 1-93 (MSLTQSAKLH…FYSMRMRLLD (93 aa)) are lumenal. Residues 94 to 114 (LFITSSIPVAKILLITGIGFY) form a helical membrane-spanning segment. At 115 to 133 (LALDQVNILNHDARKQLNN) the chain is on the cytoplasmic side. A helical membrane pass occupies residues 134–154 (IVFYVFSPSLVASSLSETITY). At 155 to 161 (ESMVKMW) the chain is on the lumenal side. The chain crosses the membrane as a helical span at residues 162–182 (FMPLNVLLTFIIGSFLGWIVI). Residues 183 to 193 (KITKPPSHLRG) lie on the Cytoplasmic side of the membrane. A helical membrane pass occupies residues 194-214 (IIVGCCAAGNLGNMPLIIIPA). The Lumenal portion of the chain corresponds to 215–231 (ICNEKGSPFGDPESCEK). A helical transmembrane segment spans residues 232–252 (FGLGYIALSMAIGAIYIWTYV). Over 253–309 (YNLMRMLANPAGETAINSTSSTMPLISPKVEVAEQVGTWGKVKQRVCSVAEKINLRT) the chain is Cytoplasmic. The helical transmembrane segment at 310-330 (IFAPSTIAALIALAVGLNPLL) threads the bilayer. Residues 331 to 347 (RKLLVGNTAPLRVIEDS) lie on the Lumenal side of the membrane. A helical membrane pass occupies residues 348–368 (VSLLGDGAIPVLTLIVGGNLL). The Cytoplasmic portion of the chain corresponds to 369–379 (NGLRGSGINKS). A helical transmembrane segment spans residues 380 to 400 (VIMGVVVVRYLLLPILGVFIV). The Lumenal portion of the chain corresponds to 401–413 (RGAHYLGLVTSEP). A helical membrane pass occupies residues 414–434 (LYQFVLLLQYVVPPAMNLGTI). The Cytoplasmic segment spans residues 435 to 446 (TQLFGSGESECS). A helical transmembrane segment spans residues 447-467 (VILFWSYALASVSLTVWPTFF). At 468-472 (MWLVA) the chain is on the lumenal side.

It belongs to the auxin efflux carrier (TC 2.A.69.2) family. In terms of tissue distribution, expressed in flowers.

It localises to the endoplasmic reticulum membrane. In terms of biological role, involved in cellular auxin homeostasis by regulating auxin metabolism. Regulates intracellular auxin accumulation at the endoplasmic reticulum and thus auxin availability for nuclear auxin signaling. This chain is Protein PIN-LIKES 1, found in Arabidopsis thaliana (Mouse-ear cress).